The primary structure comprises 1857 residues: Chitin synthase Y (1857 aa).

The disordered stretch occupies residues 1-22 (MVGPSPAGTVPSHAQSSLPSLP). The Myosin motor domain occupies 1–788 (MVGPSPAGTV…CWADLAKVGE (788 aa)). Residue 102-109 (GESGAGKT) coordinates ATP. A disordered region spans residues 601 to 653 (SSKPLRMPSMARRKASPASRLTFDAPTAEEPEDNESYGGSTAKSSGRRKSAMS). The N-linked (GlcNAc...) asparagine glycan is linked to Asn-634. An actin-binding region spans residues 668-692 (LEIVNKCLSSPSLNPYFIFCLKPND). 2 consecutive transmembrane segments (helical) span residues 898-918 (WMAI…RLFG) and 937-957 (LIIW…PGLV). Residues 961 to 1020 (QHVYSAAELESHNGKNGHDSYIAIRGVVFDLDKFMPRHYPDIVPQSSLKKYAGMDATGLF) enclose the Cytochrome b5 heme-binding domain. 2 N-linked (GlcNAc...) asparagine glycosylation sites follow: Asn-1047 and Asn-1072. A helical transmembrane segment spans residues 1209–1229 (FILAISILICAVVIFKFAAAL). Asn-1572 is a glycosylation site (N-linked (GlcNAc...) asparagine). 3 helical membrane passes run 1603–1623 (LLST…IVWL), 1630–1650 (IPWT…LIFI), and 1657–1677 (MIGW…ALPF). Positions 1799-1854 (LPSDDAILAEIREILRTADLMTVTKKSIKQELERRFGVNLDAKRPYINSATEAVLS) constitute a DEK-C domain.

This sequence in the N-terminal section; belongs to the TRAFAC class myosin-kinesin ATPase superfamily. Myosin family. In the C-terminal section; belongs to the chitin synthase family. Class V subfamily.

It is found in the cell membrane. Its subcellular location is the cell septum. The protein localises to the cell tip. The catalysed reaction is [(1-&gt;4)-N-acetyl-beta-D-glucosaminyl](n) + UDP-N-acetyl-alpha-D-glucosamine = [(1-&gt;4)-N-acetyl-beta-D-glucosaminyl](n+1) + UDP + H(+). In terms of biological role, polymerizes chitin, a structural polymer of the cell wall and septum, by transferring the sugar moiety of UDP-GlcNAc to the non-reducing end of the growing chitin polymer. Specifically involved in hyphal elongation and new cell wall formation. The chain is Chitin synthase Y from Aspergillus oryzae (strain ATCC 42149 / RIB 40) (Yellow koji mold).